The chain runs to 123 residues: UPF0102 protein PFL_5073 (123 aa).

Belongs to the UPF0102 family.

The sequence is that of UPF0102 protein PFL_5073 from Pseudomonas fluorescens (strain ATCC BAA-477 / NRRL B-23932 / Pf-5).